The following is a 474-amino-acid chain: uncharacterized protein (474 aa).

Residues 374–398 (GLICYLALFSISLMIENIIGLTISL) traverse the membrane as a helical segment.

Its subcellular location is the membrane. This is an uncharacterized protein from Borreliella burgdorferi (strain ATCC 35210 / DSM 4680 / CIP 102532 / B31) (Borrelia burgdorferi).